A 514-amino-acid chain; its full sequence is 2,3-bisphosphoglycerate-independent phosphoglycerate mutase (514 aa).

Residues aspartate 14 and serine 64 each coordinate Mn(2+). The Phosphoserine intermediate role is filled by serine 64. Substrate-binding positions include histidine 125, 155-156 (RD), arginine 187, arginine 193, 263-266 (RADR), and lysine 336. 5 residues coordinate Mn(2+): aspartate 403, histidine 407, aspartate 444, histidine 445, and histidine 463.

It belongs to the BPG-independent phosphoglycerate mutase family. Monomer. Mn(2+) serves as cofactor.

It carries out the reaction (2R)-2-phosphoglycerate = (2R)-3-phosphoglycerate. The protein operates within carbohydrate degradation; glycolysis; pyruvate from D-glyceraldehyde 3-phosphate: step 3/5. Catalyzes the interconversion of 2-phosphoglycerate and 3-phosphoglycerate. The sequence is that of 2,3-bisphosphoglycerate-independent phosphoglycerate mutase from Shewanella sp. (strain MR-4).